Here is a 677-residue protein sequence, read N- to C-terminus: DNA ligase (677 aa).

NAD(+)-binding positions include 35 to 39 (DAEFD), 85 to 86 (SL), and Glu110. Lys112 acts as the N6-AMP-lysine intermediate in catalysis. NAD(+) is bound by residues Arg133 and Glu173. The segment at 189–210 (QKEGGKPFANPRNAAAGSLRQK) is disordered. Lys289 and Lys313 together coordinate NAD(+). 4 residues coordinate Zn(2+): Cys407, Cys410, Cys426, and Cys432. Positions 596 to 677 (IPDQVLEGLT…FKQLLANGTV (82 aa)) constitute a BRCT domain.

This sequence belongs to the NAD-dependent DNA ligase family. LigA subfamily. Mg(2+) is required as a cofactor. It depends on Mn(2+) as a cofactor.

It carries out the reaction NAD(+) + (deoxyribonucleotide)n-3'-hydroxyl + 5'-phospho-(deoxyribonucleotide)m = (deoxyribonucleotide)n+m + AMP + beta-nicotinamide D-nucleotide.. In terms of biological role, DNA ligase that catalyzes the formation of phosphodiester linkages between 5'-phosphoryl and 3'-hydroxyl groups in double-stranded DNA using NAD as a coenzyme and as the energy source for the reaction. It is essential for DNA replication and repair of damaged DNA. The protein is DNA ligase of Corynebacterium diphtheriae (strain ATCC 700971 / NCTC 13129 / Biotype gravis).